The sequence spans 228 residues: Response regulator MprA (228 aa).

The Response regulatory domain maps to 2–116; it reads RILAVDDDRA…ELLARIRALL (115 aa). Aspartate 46 carries the 4-aspartylphosphate modification. Positions 127-225 form a DNA-binding region, ompR/PhoB-type; the sequence is SVAMSFSDLT…VRGVGYVLRE (99 aa).

Post-translationally, phosphorylated and dephosphorylated by MprB.

It localises to the cytoplasm. In terms of biological role, member of the two-component regulatory system MprB/MprA which contributes to maintaining a balance among several systems involved in stress resistance and is required for establishment and maintenance of persistent infection in the host. Functions as a transcriptional regulator that recognizes a 19-bp nucleotide motif comprizing two loosely conserved 8-bp direct DNA-binding motif repeats separated by a 3-bp spacer region. The sequence is that of Response regulator MprA (mprA) from Mycobacterium leprae (strain TN).